Here is a 250-residue protein sequence, read N- to C-terminus: Ribonuclease PH (250 aa).

Phosphate contacts are provided by residues R86 and 124 to 126 (GTR).

This sequence belongs to the RNase PH family. In terms of assembly, homohexameric ring arranged as a trimer of dimers.

The enzyme catalyses tRNA(n+1) + phosphate = tRNA(n) + a ribonucleoside 5'-diphosphate. In terms of biological role, phosphorolytic 3'-5' exoribonuclease that plays an important role in tRNA 3'-end maturation. Removes nucleotide residues following the 3'-CCA terminus of tRNAs; can also add nucleotides to the ends of RNA molecules by using nucleoside diphosphates as substrates, but this may not be physiologically important. Probably plays a role in initiation of 16S rRNA degradation (leading to ribosome degradation) during starvation. The sequence is that of Ribonuclease PH from Exiguobacterium sibiricum (strain DSM 17290 / CCUG 55495 / CIP 109462 / JCM 13490 / 255-15).